The following is a 287-amino-acid chain: MAGAKEIRSKIASVQNTQKITKAMEMVAASKMRKSQDRMAASRPYAETMRKVIGHLAHGNLEYKHPYLEERDVKRVGYLVVSTDRGLCGGLNINLFKKLLAEMKTWTDKGVQCDLAMIGSKGVSFFNSVGGNVVAQVTGMGDNPSLSELIGPVKVMLQAYDEGRLDKLYIVSNKFINTMSQVPTISQLLPLPASDDDDLKHKSWDYLYEPDPKALLDTLLRRYVESQVYQGVVENLASEQAARMVAMKAATDNGGSLIKELQLVYNKARQASITQELTEIVSGAAAV.

The protein belongs to the ATPase gamma chain family. As to quaternary structure, F-type ATPases have 2 components, CF(1) - the catalytic core - and CF(0) - the membrane proton channel. CF(1) has five subunits: alpha(3), beta(3), gamma(1), delta(1), epsilon(1). CF(0) has three main subunits: a, b and c.

It is found in the cell inner membrane. Its function is as follows. Produces ATP from ADP in the presence of a proton gradient across the membrane. The gamma chain is believed to be important in regulating ATPase activity and the flow of protons through the CF(0) complex. In Escherichia coli (strain 55989 / EAEC), this protein is ATP synthase gamma chain.